Consider the following 625-residue polypeptide: Probable receptor-like protein kinase At1g11050 (625 aa).

The signal sequence occupies residues 1–20 (MPNSILFLLLSFLYLTNCVA). Residues 21–227 (QSPSQTCPLD…PLNSKKKRHT (207 aa)) lie on the Extracellular side of the membrane. Asparagine 40, asparagine 106, asparagine 121, and asparagine 177 each carry an N-linked (GlcNAc...) asparagine glycan. The helical transmembrane segment at 228-248 (VALALGITGAIFGALVIAGLI) threads the bilayer. Over 249–625 (CLYFRFGKAV…LQIHSGDMLR (377 aa)) the chain is Cytoplasmic. The Protein kinase domain maps to 295 to 555 (FSQKNFIGRG…NPKGIMERFL (261 aa)). ATP-binding positions include 301–309 (IGRGGFGFV) and lysine 323. Aspartate 426 serves as the catalytic Proton acceptor.

Belongs to the protein kinase superfamily. Ser/Thr protein kinase family.

It is found in the membrane. It catalyses the reaction L-seryl-[protein] + ATP = O-phospho-L-seryl-[protein] + ADP + H(+). It carries out the reaction L-threonyl-[protein] + ATP = O-phospho-L-threonyl-[protein] + ADP + H(+). The chain is Probable receptor-like protein kinase At1g11050 from Arabidopsis thaliana (Mouse-ear cress).